Consider the following 740-residue polypeptide: UvrABC system protein B (740 aa).

The tract at residues 1–36 (MTIAIRTTLDEPENHSDFVPHRPSRPEKTEPSKPFR) is disordered. Basic and acidic residues predominate over residues 8–33 (TLDEPENHSDFVPHRPSRPEKTEPSK). The 389-residue stretch at 56 to 444 (KDIQKGERDQ…GGVFVEQIIR (389 aa)) folds into the Helicase ATP-binding domain. 69-76 (GVTGSGKT) is an ATP binding site. The Beta-hairpin motif lies at 122 to 145 (YYDYYQPEAYVPRTDTYIEKDSAI). The Helicase C-terminal domain occupies 461-627 (QVDNLIFEAK…TVKRQVDDIV (167 aa)). A UVR domain is found at 651 to 686 (ARSISETEKEMLEAAANLEFEKAAQLRDVLHQLKRQ). The segment at 687-740 (ELGLPPEKSSEIQGRSEAGRPGTRKTRSDKAREAKASKRVKQEAGEKLLRSRGH) is disordered. Residues 712–740 (TRSDKAREAKASKRVKQEAGEKLLRSRGH) are compositionally biased toward basic and acidic residues.

The protein belongs to the UvrB family. Forms a heterotetramer with UvrA during the search for lesions. Interacts with UvrC in an incision complex.

Its subcellular location is the cytoplasm. Functionally, the UvrABC repair system catalyzes the recognition and processing of DNA lesions. A damage recognition complex composed of 2 UvrA and 2 UvrB subunits scans DNA for abnormalities. Upon binding of the UvrA(2)B(2) complex to a putative damaged site, the DNA wraps around one UvrB monomer. DNA wrap is dependent on ATP binding by UvrB and probably causes local melting of the DNA helix, facilitating insertion of UvrB beta-hairpin between the DNA strands. Then UvrB probes one DNA strand for the presence of a lesion. If a lesion is found the UvrA subunits dissociate and the UvrB-DNA preincision complex is formed. This complex is subsequently bound by UvrC and the second UvrB is released. If no lesion is found, the DNA wraps around the other UvrB subunit that will check the other stand for damage. The protein is UvrABC system protein B of Zymomonas mobilis subsp. mobilis (strain ATCC 31821 / ZM4 / CP4).